The following is a 450-amino-acid chain: Phosphoglucosamine mutase (450 aa).

Ser-101 acts as the Phosphoserine intermediate in catalysis. Mg(2+)-binding residues include Ser-101, Asp-240, Asp-242, and Asp-244. Residue Ser-101 is modified to Phosphoserine.

The protein belongs to the phosphohexose mutase family. The cofactor is Mg(2+). Post-translationally, activated by phosphorylation.

It carries out the reaction alpha-D-glucosamine 1-phosphate = D-glucosamine 6-phosphate. Its function is as follows. Catalyzes the conversion of glucosamine-6-phosphate to glucosamine-1-phosphate. The protein is Phosphoglucosamine mutase of Streptococcus pneumoniae serotype 4 (strain ATCC BAA-334 / TIGR4).